A 461-amino-acid chain; its full sequence is Cysteine--tRNA ligase (461 aa).

A Zn(2+)-binding site is contributed by cysteine 28. Residues 30–40 carry the 'HIGH' region motif; it reads ITVYDLCHIGH. Cysteine 209, histidine 234, and glutamate 238 together coordinate Zn(2+). The short motif at 266–270 is the 'KMSKS' region element; sequence KMSKS. Lysine 269 serves as a coordination point for ATP.

The protein belongs to the class-I aminoacyl-tRNA synthetase family. Monomer. Requires Zn(2+) as cofactor.

It localises to the cytoplasm. It carries out the reaction tRNA(Cys) + L-cysteine + ATP = L-cysteinyl-tRNA(Cys) + AMP + diphosphate. The sequence is that of Cysteine--tRNA ligase from Escherichia coli (strain K12 / MC4100 / BW2952).